The following is a 3387-amino-acid chain: MNQRKKVVRPPFNMLKRERNRVSTPQGLVKRFSIGLFSGKGPLRMVLAFITFLRVLSIPPTAGILKRWGQLKKTKAIKILTGFRKEIGRMLNILNGRKRSTVTLLCLIPTVMAFHLSTRDGEPLMIVAKHERGRPLLFKTTEGINKCTLIAMDLGEMCEDTVTYKCPLLVNTEPEDIDCWCNLTSTWVMYGTCTQNGERRREKRSVALTPHSGMGLETRAETWMSSEGAWKHAQRVESWILRNPGFALLAGFMAYMIGQTGIQRTVFFVLMMLVAPSYGMRCIGVGNRDFVEGVSGGAWVDLVLEHGGCVTTMAQGKPTLDFELIKTTAKEVALLRTYCIEASISNITTATRCPTQGEPYLKEEQDQQYICRRDVVDRGWGNGCGLFGKGGVVTCAKFSCSGKITGNLVQIENLEYTVVVTVHNGDTHAVGNDTSNHGVTATITPRSPSVEVELPDYGELSLDCEPRSGIDFNEMILMKMEKKTWLVHKQWFLDLPLPWTAGADTSEVHWNHKERMVTFKVPHAKRQDVTVLGSQEGAMHSALTGATEVDSGDGNHMFAGHLKCKVRMEKLRIKGMSYTMCSGKFSIDREMAETQHGTTVVKVKYEGTGAPCKVPIEIRDVNKEKVVGRIISSTPFAENTNSVTNIELEPPFGDSYIVIGVGDSALTLHWFRKGSSIGKMFESTYRGAKRMAILGETAWDFGSVGGLFTSLGKAVHQVFGSVYTTMFGGVSWMVRILIGLLVLWIGTNSRNTPMAMTCIAVGGITLFLGFTVQADMGCVVSWTGKELKCGSGIFVTDNVHTWTEQYQFQPESPARLASAILNAHKDGVCGIRSTTRLENVMWKQITNELNYVLWEGGHDLTVVAGDVKGVLVKGKRALTPPVNDLKYSWKTWGKAKIFTPEAKNSTFLIDGPDTSECPNERRAWNFLEVEDYGFGMFTTSIWMKFREGSSEVCDHRLMSAAIKDQKAVHADMGYWLESSKNQTWQIEKASLIEVKTCLWPKTHTLWSNGVLESQMLIPKAYAGPFSQHNYRQGYATQTMGPWHLGKLEIDFGECPGTTVTIQEDCDHRGPSLRTTTASGKLVTQWCCRSCTMPPLRFLGEDGCWYGMEIRPLSEREENMVKSQVSAGQGSSETFSMGLLCLTLFIEECLRRKVTRKHMILVVVTTFCAIILGGLTWMDLLRAIIMLGDTMLSRVGGQTHLAIMIVFKMSPGYVLGVFLRKLTSRETALMVIGMAMTTVFSIPHDLMELIDGISLGLILLKMVTHFDNTQVGTLALSLTFIRSTMPLTMAWRTIMAVLFAVTLIPLCRTSCLQKQSHWVEITAIILGAQALPVYLMTLMKGASKRSWPLNEGIMAVGLVSLLGSALLKNDVPLAGPMVAGGLLLAAYVMSGSSADLSLERAANVQWDEMADITGSSPIIEVKQDEDGSFSIRDVEETNMITLLVKLALITVSGLYPLAIPITMTLWYMWQVRTQRSGALWDVPSPATAQKATLTEGVYRIMQRGLLGRTQVGVGIHMEGVFHTMWHVTRGSVICHETGRLEPSWADVRNDMISYGGGWRLGDKWDKEEDVQVLAIEPGKNPKHVQTKPGLFKTLTGEIGAVTLDFKPGTSGSPIINKKGKVIGLYGNGVVTKSGDYVSAITQAERIGEPDYEVDEDIFRKKRLTIMDLHPGAGKTKRILPSIVREALKRRLRTLILAPTRVVAAEMEEALRGLPIRYQTPAVKSEHTGREIVDLMCHATFTTRLLSSTRVPNYNLIVMDEAHFTDPSSVAARGYISTRVEMGEAAAIFMTATPPGATDPFPQSNSPIEDIEREIPERSWNTGFDWITDYQGKTVWFVPSIKAGNDIANCLRKSGKKVIQLSRKTFDTEYPKTKLTDWDFVVTTDISEMGANFRAGRVIDPRRCLKPVILTDGPERVILAGPIPVTPASAAQRRGRIGRNPAQEDDQYVFSGDPLKNDEDHAHWTEAKMLLDNIYTPEGIIPTLFGPEREKTQAIDGEFRLRGEQRKTFVELMKRGDLPVWLSYKVASAGISYKDREWCFTGERNNQILEENMEVEIWTREGEKKKLRPKWLDARVYADPMALKDFKEFASGRKSITLDILTEIASLPTYLSSRAKLALDNIVMLHTTERGGRAYQHALNELPESLETLMLVALLGAMTAGIFLFFMQGKGIGKLSVGLIAIAVASGLLWVAEIQPQWIAASIILEFFLMVLLIPEPEKQRTPQDNQLIYVILAILTIIGLVAANEMGLIEKTKADFGFYQVKTETTILDVDLRPASAWTLYAVATTILTPMLRHTIENTSANLSLAAIANQAAVLMGLGKGWPLHRMDLGVPLLAMGCYSQVNPTTLTASLVMLLVHYAIIGPGLQAKATREAQKRTAAGIMKNPTVDGITVIDLEPISYDPKFEKQLGQVMLLVLCAGQLLLMRTTWAFCEVLTLATGPVLTLWEGNPGRFWNTTIAVSTANIFRGSYLAGAGLAFSLIKNAQTPRRGTGTTGETLGEKWKRQLNSLDRKEFEEYKRSGILEVDRTEAKSALKDGSKIKHAVSRGSSKIRWIVERGMVKPKGKVVDLGCGRGGWSYYMATLKNVTEVKGYTKGGPGHEEPIPMATYGWNLVKLHSGVDVFYKPTEQVDTLLCDIGESSSNPTIEEGRTLRVLKMVEPWLSSKPEFCIKVLNPYMPTVIEELEKLQRKHGGSLIRCPLSRNSTHEMYWVSGASGNIVSSVNTTSKMLLNRFTTRHRKPTYEKDVDLGAGTRSVSTETEKPDMTIIGRRLQRLQEEHKETWHYDQENPYRTWAYHGSYEAPSTGSASSMVNGVVKLLTKPWDVIPMVTQLAMTDTTPFGQQRVFKEKVDTRTPQPKLGTRVVMTTTANWLWALLGRKKNPRLCTREEFISKVRSNAAIGAVFQEEQGWTSASEAVNDSRFWELVDKERALHQEGKCESCVYNMMGKREKKLGEFGRAKGSRAIWYMWLGARFLEFEALGFLNEDHWFGRENSWSGVEGEGLHRLGYILEDIDRKDGDLMYADDTAGWDTRITEDDLLNEELITEQMAPHHRILAKAIFKLTYQNKVVKVLRPTPKGAVMDIISRKDQRGSGQVGTYGLNTFTNMEVQLIRQMEAEGVITQDDMQNPKGLKERVEKWLKECGVDRLKRMAISGDDCVVKPLDERFSTSLLFLNDMGKVRKDIPQWEPSKGWKNWQEVPFCSHHFHKIFMKDGRSLVVPCRNQDELIGRARISQGAGWSLKETACLGKAYAQMWSLMYFHRRDLRLASMAICSAVPTEWFPTSRTTWSIHAHHQWMTTEDMLKVWNRVWIEDNPNMTDKTPVHSWEDIPYLGKREDLWCGSLIGLSSRATWAKNIHTAITQVRNLIGKEEYVDYMPVMRRYSALSESEGVL.

Over 1 to 100 the chain is Cytoplasmic; the sequence is MNQRKKVVRP…LNILNGRKRS (100 aa). The interval 36–71 is hydrophobic; homodimerization of capsid protein C; that stretch reads LFSGKGPLRMVLAFITFLRVLSIPPTAGILKRWGQL. The propeptide at 100-113 is ER anchor for the capsid protein C, removed in mature form by serine protease NS3; that stretch reads STVTLLCLIPTVMA. The chain crosses the membrane as a helical span at residues 101 to 117; it reads TVTLLCLIPTVMAFHLS. Over 118–237 the chain is Extracellular; that stretch reads TRDGEPLMIV…GAWKHAQRVE (120 aa). The N-linked (GlcNAc...) asparagine; by host glycan is linked to Asn-182. Residues 238 to 258 form a helical membrane-spanning segment; sequence SWILRNPGFALLAGFMAYMIG. The Cytoplasmic segment spans residues 259 to 265; it reads QTGIQRT. The chain crosses the membrane as a helical span at residues 266 to 279; that stretch reads VFFVLMMLVAPSYG. Residues 280–725 are Extracellular-facing; sequence MRCIGVGNRD…HQVFGSVYTT (446 aa). Intrachain disulfides connect Cys-282/Cys-309, Cys-339/Cys-400, Cys-353/Cys-384, and Cys-371/Cys-395. A glycan (N-linked (GlcNAc...) asparagine; by host) is linked at Asn-346. Residues 377–390 form a fusion peptide region; it reads DRGWGNGCGLFGKG. Residue Asn-432 is glycosylated (N-linked (GlcNAc...) asparagine; by host). 2 cysteine pairs are disulfide-bonded: Cys-464–Cys-564 and Cys-581–Cys-612. A helical transmembrane segment spans residues 726 to 746; sequence MFGGVSWMVRILIGLLVLWIG. Residues 747–751 lie on the Cytoplasmic side of the membrane; that stretch reads TNSRN. A helical transmembrane segment spans residues 752–772; it reads TPMAMTCIAVGGITLFLGFTV. The Extracellular segment spans residues 773-1193; sequence QADMGCVVSW…IMLGDTMLSR (421 aa). 6 disulfides stabilise this stretch: Cys-778/Cys-789, Cys-829/Cys-917, Cys-953/Cys-997, Cys-1054/Cys-1103, Cys-1065/Cys-1087, and Cys-1086/Cys-1090. N-linked (GlcNAc...) asparagine; by host glycans are attached at residues Asn-904 and Asn-981. Residues 1194-1218 traverse the membrane as a helical segment; the sequence is VGGQTHLAIMIVFKMSPGYVLGVFL. The Lumenal portion of the chain corresponds to 1219–1224; it reads RKLTSR. Residues 1225–1243 traverse the membrane as a helical segment; that stretch reads ETALMVIGMAMTTVFSIPH. Topologically, residues 1244-1267 are cytoplasmic; sequence DLMELIDGISLGLILLKMVTHFDN. A helical transmembrane segment spans residues 1268–1288; that stretch reads TQVGTLALSLTFIRSTMPLTM. Ala-1289 is a topological domain (lumenal). The helical transmembrane segment at 1290–1308 threads the bilayer; the sequence is WRTIMAVLFAVTLIPLCRT. The Lumenal segment spans residues 1309–1316; sequence SCLQKQSH. The chain crosses the membrane as a helical span at residues 1317–1337; sequence WVEITAIILGAQALPVYLMTL. Residues 1338 to 1345 are Cytoplasmic-facing; the sequence is MKGASKRS. A helical membrane pass occupies residues 1346-1366; that stretch reads WPLNEGIMAVGLVSLLGSALL. Topologically, residues 1367-1369 are lumenal; sequence KND. A helical transmembrane segment spans residues 1370–1390; the sequence is VPLAGPMVAGGLLLAAYVMSG. The Cytoplasmic segment spans residues 1391-1444; sequence SSADLSLERAANVQWDEMADITGSSPIIEVKQDEDGSFSIRDVEETNMITLLVK. Residues 1397-1436 form an interacts with and activates NS3 protease region; that stretch reads LERAANVQWDEMADITGSSPIIEVKQDEDGSFSIRDVEET. Positions 1445 to 1465 form an intramembrane region, helical; that stretch reads LALITVSGLYPLAIPITMTLW. Topologically, residues 1466 to 2146 are cytoplasmic; sequence YMWQVRTQRS…LNELPESLET (681 aa). Positions 1475–1652 constitute a Peptidase S7 domain; it reads SGALWDVPSP…ERIGEPDYEV (178 aa). Active-site charge relay system; for serine protease NS3 activity residues include His-1525, Asp-1549, and Ser-1609. Residues 1654–1810 enclose the Helicase ATP-binding domain; it reads EDIFRKKRLT…QSNSPIEDIE (157 aa). An important for RNA-binding region spans residues 1658–1661; sequence RKKR. 1667–1674 serves as a coordination point for ATP; the sequence is LHPGAGKT. A DEAH box motif is present at residues 1758 to 1761; it reads DEAH. In terms of domain architecture, Helicase C-terminal spans 1820–1987; that stretch reads TGFDWITDYQ…IIPTLFGPER (168 aa). At Lys-1862 the chain carries N6-acetyllysine; by host. Residues 2147 to 2167 traverse the membrane as a helical segment; it reads LMLVALLGAMTAGIFLFFMQG. Topologically, residues 2168–2169 are lumenal; the sequence is KG. An intramembrane region (helical) is located at residues 2170 to 2190; the sequence is IGKLSVGLIAIAVASGLLWVA. Position 2191 (Glu-2191) is a topological domain, lumenal. Residues 2192–2212 traverse the membrane as a helical segment; sequence IQPQWIAASIILEFFLMVLLI. Residues 2213-2225 lie on the Cytoplasmic side of the membrane; sequence PEPEKQRTPQDNQ. The chain crosses the membrane as a helical span at residues 2226–2246; it reads LIYVILAILTIIGLVAANEMG. The Lumenal portion of the chain corresponds to 2247 to 2270; sequence LIEKTKADFGFYQVKTETTILDVD. Positions 2271-2291 form an intramembrane region, helical; it reads LRPASAWTLYAVATTILTPML. Topologically, residues 2292–2301 are lumenal; it reads RHTIENTSAN. N-linked (GlcNAc...) asparagine; by host glycans are attached at residues Asn-2297 and Asn-2301. The helical intramembrane region spans 2302-2322; it reads LSLAAIANQAAVLMGLGKGWP. Topologically, residues 2323–2343 are lumenal; sequence LHRMDLGVPLLAMGCYSQVNP. Residues 2344-2364 form a helical membrane-spanning segment; that stretch reads TTLTASLVMLLVHYAIIGPGL. Over 2365–2409 the chain is Cytoplasmic; the sequence is QAKATREAQKRTAAGIMKNPTVDGITVIDLEPISYDPKFEKQLGQ. Residues 2410–2430 form a helical membrane-spanning segment; sequence VMLLVLCAGQLLLMRTTWAFC. The Lumenal segment spans residues 2431–2455; the sequence is EVLTLATGPVLTLWEGNPGRFWNTT. N-linked (GlcNAc...) asparagine; by host glycosylation is present at Asn-2453. The helical transmembrane segment at 2456-2476 threads the bilayer; the sequence is IAVSTANIFRGSYLAGAGLAF. At 2477–3387 the chain is on the cytoplasmic side; that stretch reads SLIKNAQTPR…SALSESEGVL (911 aa). An mRNA cap 0-1 NS5-type MT domain is found at 2489–2751; the sequence is TGTTGETLGE…DVDLGAGTRS (263 aa). Ser-2543 is an S-adenosyl-L-methionine binding site. Ser-2543 carries the phosphoserine modification. The active-site For 2'-O-MTase activity is the Lys-2548. The SUMO-interacting motif motif lies at 2564 to 2567; the sequence is VVDL. Residues Gly-2573, Trp-2574, Thr-2591, Lys-2592, Asp-2618, and Val-2619 each coordinate S-adenosyl-L-methionine. The For 2'-O-MTase activity role is filled by Asp-2633. Residue Ile-2634 coordinates S-adenosyl-L-methionine. Active-site for 2'-O-MTase activity residues include Lys-2668 and Glu-2704. Position 2706 (Tyr-2706) interacts with S-adenosyl-L-methionine. Glu-2925, His-2929, Cys-2934, and Cys-2937 together coordinate Zn(2+). The RdRp catalytic domain maps to 3016–3166; the sequence is LMYADDTAGW…PLDERFSTSL (151 aa). Residues His-3200, Cys-3216, and Cys-3335 each coordinate Zn(2+).

It in the N-terminal section; belongs to the class I-like SAM-binding methyltransferase superfamily. mRNA cap 0-1 NS5-type methyltransferase family. In terms of assembly, homodimer. Interacts (via N-terminus) with host EXOC1 (via C-terminus); this interaction results in EXOC1 degradation through the proteasome degradation pathway. Forms heterodimers with envelope protein E in the endoplasmic reticulum and Golgi. As to quaternary structure, homodimer; in the endoplasmic reticulum and Golgi. Interacts with protein prM. Interacts with non-structural protein 1. In terms of assembly, homodimer; Homohexamer when secreted. Interacts with envelope protein E. Interacts (via N-terminus) with serine protease NS3. As to quaternary structure, forms a heterodimer with serine protease NS3. May form homooligomers. In terms of assembly, forms a heterodimer with NS2B. Interacts with NS4B. Interacts with unphosphorylated RNA-directed RNA polymerase NS5; this interaction stimulates RNA-directed RNA polymerase NS5 guanylyltransferase activity. Interacts with host SHFL. Interacts with host MAVS; this interaction inhibits the synthesis of IFN-beta. Interacts with host SHFL. Interacts with host AUP1; the interaction occurs in the presence of Dengue virus NS4B and induces lipophagy which facilitates production of virus progeny particles. As to quaternary structure, interacts with serine protease NS3. In terms of assembly, homodimer. Interacts with host STAT2; this interaction inhibits the phosphorylation of the latter, and, when all viral proteins are present (polyprotein), targets STAT2 for degradation. Interacts with serine protease NS3. Interacts with host PAF1 complex; the interaction may prevent the recruitment of the PAF1 complex to interferon-responsive genes, and thus reduces the immune response. Specific enzymatic cleavages in vivo yield mature proteins. Cleavages in the lumen of endoplasmic reticulum are performed by host signal peptidase, whereas cleavages in the cytoplasmic side are performed by serine protease NS3. Signal cleavage at the 2K-4B site requires a prior NS3 protease-mediated cleavage at the 4A-2K site. Post-translationally, cleaved in post-Golgi vesicles by a host furin, releasing the mature small envelope protein M, and peptide pr. This cleavage is incomplete as up to 30% of viral particles still carry uncleaved prM. In terms of processing, N-glycosylated. N-glycosylated. The excreted form is glycosylated and this is required for efficient secretion of the protein from infected cells. Post-translationally, acetylated by host KAT5. Acetylation modulates NS3 RNA-binding and unwinding activities and plays an important positive role for viral replication. In terms of processing, sumoylation of RNA-directed RNA polymerase NS5 increases NS5 protein stability allowing proper viral RNA replication. Phosphorylated on serines residues. This phosphorylation may trigger NS5 nuclear localization.

Its subcellular location is the virion. The protein resides in the host nucleus. The protein localises to the host cytoplasm. It localises to the host perinuclear region. It is found in the secreted. Its subcellular location is the virion membrane. The protein resides in the host endoplasmic reticulum membrane. The protein localises to the host mitochondrion. The enzyme catalyses Selective hydrolysis of -Xaa-Xaa-|-Yaa- bonds in which each of the Xaa can be either Arg or Lys and Yaa can be either Ser or Ala.. It catalyses the reaction RNA(n) + a ribonucleoside 5'-triphosphate = RNA(n+1) + diphosphate. The catalysed reaction is a ribonucleoside 5'-triphosphate + H2O = a ribonucleoside 5'-diphosphate + phosphate + H(+). It carries out the reaction ATP + H2O = ADP + phosphate + H(+). The enzyme catalyses a 5'-end (5'-triphosphoguanosine)-ribonucleoside in mRNA + S-adenosyl-L-methionine = a 5'-end (N(7)-methyl 5'-triphosphoguanosine)-ribonucleoside in mRNA + S-adenosyl-L-homocysteine. It catalyses the reaction a 5'-end (N(7)-methyl 5'-triphosphoguanosine)-ribonucleoside in mRNA + S-adenosyl-L-methionine = a 5'-end (N(7)-methyl 5'-triphosphoguanosine)-(2'-O-methyl-ribonucleoside) in mRNA + S-adenosyl-L-homocysteine + H(+). Plays a role in virus budding by binding to the cell membrane and gathering the viral RNA into a nucleocapsid that forms the core of a mature virus particle. During virus entry, may induce genome penetration into the host cytoplasm after hemifusion induced by the surface proteins. Can migrate to the cell nucleus where it modulates host functions. Overcomes the anti-viral effects of host EXOC1 by sequestering and degrading the latter through the proteasome degradation pathway. In terms of biological role, inhibits RNA silencing by interfering with host Dicer. Its function is as follows. Prevents premature fusion activity of envelope proteins in trans-Golgi by binding to envelope protein E at pH6.0. After virion release in extracellular space, gets dissociated from E dimers. Functionally, acts as a chaperone for envelope protein E during intracellular virion assembly by masking and inactivating envelope protein E fusion peptide. prM is the only viral peptide matured by host furin in the trans-Golgi network probably to avoid catastrophic activation of the viral fusion activity in acidic Golgi compartment prior to virion release. prM-E cleavage is inefficient, and many virions are only partially matured. These uncleaved prM would play a role in immune evasion. May play a role in virus budding. Exerts cytotoxic effects by activating a mitochondrial apoptotic pathway through M ectodomain. May display a viroporin activity. In terms of biological role, binds to host cell surface receptor and mediates fusion between viral and cellular membranes. Envelope protein is synthesized in the endoplasmic reticulum in the form of heterodimer with protein prM. They play a role in virion budding in the ER, and the newly formed immature particle is covered with 60 spikes composed of heterodimer between precursor prM and envelope protein E. The virion is transported to the Golgi apparatus where the low pH causes dissociation of PrM-E heterodimers and formation of E homodimers. prM-E cleavage is inefficient, and many virions are only partially matured. These uncleaved prM would play a role in immune evasion. Its function is as follows. Involved in immune evasion, pathogenesis and viral replication. Once cleaved off the polyprotein, is targeted to three destinations: the viral replication cycle, the plasma membrane and the extracellular compartment. Essential for viral replication. Required for formation of the replication complex and recruitment of other non-structural proteins to the ER-derived membrane structures. Excreted as a hexameric lipoparticle that plays a role against host immune response. Antagonizing the complement function. Binds to the host macrophages and dendritic cells. Inhibits signal transduction originating from Toll-like receptor 3 (TLR3). Functionally, disrupts the host endothelial glycocalyx layer of host pulmonary microvascular endothelial cells, inducing degradation of sialic acid and shedding of heparan sulfate proteoglycans. NS1 induces expression of sialidases, heparanase, and activates cathepsin L, which activates heparanase via enzymatic cleavage. These effects are probably linked to the endothelial hyperpermeability observed in severe dengue disease. Component of the viral RNA replication complex that functions in virion assembly and antagonizes the host immune response. In terms of biological role, required cofactor for the serine protease function of NS3. May have membrane-destabilizing activity and form viroporins. Its function is as follows. Displays three enzymatic activities: serine protease, NTPase and RNA helicase. NS3 serine protease, in association with NS2B, performs its autocleavage and cleaves the polyprotein at dibasic sites in the cytoplasm: C-prM, NS2A-NS2B, NS2B-NS3, NS3-NS4A, NS4A-2K and NS4B-NS5. NS3 RNA helicase binds RNA and unwinds dsRNA in the 3' to 5' direction. Functionally, regulates the ATPase activity of the NS3 helicase activity. NS4A allows NS3 helicase to conserve energy during unwinding. Plays a role in the inhibition of the host innate immune response. Interacts with host MAVS and thereby prevents the interaction between RIGI and MAVS. In turn, IFN-beta production is impaired. Interacts with host AUP1 which mediates induction of lipophagy in host cells and facilitates production of virus progeny particles. Functions as a signal peptide for NS4B and is required for the interferon antagonism activity of the latter. In terms of biological role, induces the formation of ER-derived membrane vesicles where the viral replication takes place. Inhibits interferon (IFN)-induced host STAT1 phosphorylation and nuclear translocation, thereby preventing the establishment of cellular antiviral state by blocking the IFN-alpha/beta pathway. Its function is as follows. Replicates the viral (+) and (-) RNA genome, and performs the capping of genomes in the cytoplasm. NS5 methylates viral RNA cap at guanine N-7 and ribose 2'-O positions. Besides its role in RNA genome replication, also prevents the establishment of cellular antiviral state by blocking the interferon-alpha/beta (IFN-alpha/beta) signaling pathway. Inhibits host TYK2 and STAT2 phosphorylation, thereby preventing activation of JAK-STAT signaling pathway. May reduce immune responses by preventing the recruitment of the host PAF1 complex to interferon-responsive genes. This is Genome polyprotein from Aedes aegypti (Yellowfever mosquito).